The sequence spans 46 residues: DNA-directed RNA polymerases I, II, and III subunit rpabc4 (46 aa).

Zn(2+) is bound by residues cysteine 7, cysteine 10, cysteine 24, and cysteine 27. A C4-type zinc finger spans residues 7 to 27; it reads CGECGAEHEIKPKEPVKCKDC.

This sequence belongs to the archaeal Rpo12/eukaryotic RPC10 RNA polymerase subunit family. Component of the RNA polymerase I (Pol I), RNA polymerase II (Pol II) and RNA polymerase III (Pol III) complexes consisting of at least 13, 12 and 17 subunits, respectively.

It localises to the nucleus. Functionally, DNA-dependent RNA polymerase catalyzes the transcription of DNA into RNA using the four ribonucleoside triphosphates as substrates. Common component of RNA polymerases I, II and III which synthesize ribosomal RNA precursors, mRNA precursors and many functional non-coding RNAs, and a small RNAs, such as 5S rRNA and tRNAs, respectively. In Dictyostelium discoideum (Social amoeba), this protein is DNA-directed RNA polymerases I, II, and III subunit rpabc4 (polr2k).